The following is a 414-amino-acid chain: Snake venom metalloproteinase (414 aa).

The signal sequence occupies residues 1–20; it reads MIEVLLVTICLAVFPYQGSS. Residues 21–190 constitute a propeptide that is removed on maturation; that stretch reads IILESGNVND…KASDLNFNSD (170 aa). At Q191 the chain carries Pyrrolidone carboxylic acid. Positions 197 to 393 constitute a Peptidase M12B domain; sequence RYVELVIVAD…YKPQCILNKP (197 aa). Ca(2+)-binding residues include E200 and D284. 2 disulfides stabilise this stretch: C308–C388 and C348–C355. Residue H333 participates in Zn(2+) binding. Residue E334 is part of the active site. Zn(2+) contacts are provided by H337 and H343. Residues C388 and N391 each coordinate Ca(2+). Residues 394–414 constitute a propeptide that is removed on maturation; the sequence is LRIDPVSTPVSGNELLEAGEE.

Belongs to the venom metalloproteinase (M12B) family. P-I subfamily. Monomer. Zn(2+) serves as cofactor. Expressed by the venom gland.

The protein resides in the secreted. Snake venom metalloproteinase that impairs hemostasis in the envenomed animal. The protein is Snake venom metalloproteinase of Crotalus molossus molossus (Northern black-tailed rattlesnake).